The sequence spans 1671 residues: MAQQQQQQLQQQQQHHTSSINNNNSILLLHQQQPQQQQQQQLDQLQQYNNNLYSQNYNMEEYERRKRREREKIERQQGIQIDDRETSLFGEPRRLTEGDAEITAALGEFFEARVYINNQTVGISRSAPGAGNPRLQPNLPPQAKSLGHSPSSASSAAGPTSASATTALPGQQQHYQQQQRPPTYVKQADNKPPYNGRGGYPGQPMKNDIPSSSGMAPPRGPPRSSSSNSNSSSATNNASSGGVPANTPLGPPLSTQMPNGREKSFLGPPAPALHNGTGGGRFVPPAASKRPGVGQQPPPPEKDVNKIISDIANIFSVQPLTSIAATPHAPTRENYNLLAPNKQKYAMDIPSSPPSAEPSSLMTPLFTPIAPLVTTPPQASQLPLGAATSGTILAGEPLAPLHQLPPTPPKAASGVTSPGPTKPLKTEKNHSLEKQDSCLENDLELSESEDEQRKKEGRSAGNSSNSSESDSSESGSESSSKNDLQHHPNHQQHHHQLQQQQQASMQQQQVLQQQQQHRPQPLTSNGAQNKKFRHEIIARGSNTITGLLSSSGFGSGGSVGPAGVNSSAVMGAGSVSGGTLSSGGSSSNKTPSPTESNKWNLSRFFHKPANQTNSESVSPGNVSMKVPGILPGGAQIIPESIDVTTAIVKNEKIHDDHMAMEEGEEEDDDEEQQMRYGGGLSVTPVAVKKEAIDAVSEMALGAIPKTQIKRESAEALLSARLSDSGTSASGSSSSSSSSSDSAVGGEVVPMPGPGETFQLPGVPADITTVVRVPPTQSQKAPPSNSVTLTPILPLPTSPKQRQKKPRKKKAVTSAPILDSSDDDEPPPKHPGLDHSAVSVQAQPATDTVKKGRGRPRKQQQSGGSGNLSSASAGSSSQTKGPTLTAAKKPLAKTPLAMSRARKREHSSQSSSNGNTPTKKVATPVLVAAPLKPTSVTAGSSSSDEDSSSSAESSSKSSSSSSSSDDTETQNTNCRIVKLNKTGAVQKKALLGSGSSSASSSGSEPEDQTSRSQVGSGQALAQQLPPYKQLPISQHSQHLSSSECSSSSGGCTAVCSSSSGEEDEGRREKERERKPKSDKNKISTLTRIFNPKEGGAKKQGQVVIVDLQEEQQQGKLDAAAQPPPPHAPPAAPAAIMAKPRMTPTQQQQLGAGLASPARTTTPHLTSLICKIDLSKLSRERIMRLKKLTPAQQNGHLTPKDQATNAVHVPNGYAGDTNPAAKVKHEHPVKPEPELDAGYEAKFKPGNVKQEFQLKQERDRDRERERERERERERDREREQPPGRRRKRSSSSSSSPYKEKKRKKEKADQLQIGKELLPVPVLLPSNNHERMPNHDRLSYDKLQLLHEDAAAVIGDVSAANGSPTKKLLVMSPLPPPPTVTVAPATCNEAVQTTPPSATTTTATAPPVPATRLIYRSYFDRDVEHPSDDLRKNNQFLQEAINRKHAADLERDSFNQVTLYLEAVVYFLLTADAMERCSSEQATNTMYKDTLSLIKFISTKFRPYQQQSTTNIQHETHNKVAILSLRCQSLISLKLYKLRRKDCRAIINGLTDFFRVGRGDIANGNTPSSISPSNSVGSQGSGSNTPPGRIVSPDIHNMLCKQNEFLSYLNSAHELWDQADRLVRTGNHIDFIRELDHENGPLTLHSTMHEVFRYVQAGLKTLRDAVSHPTHQSQ.

Disordered regions lie at residues 53–79 (YSQN…QQGI), 126–304 (SAPG…EKDV), 393–599 (LAGE…SNKW), 723–761 (DSGT…QLPG), 774–1162 (PTQS…TTPH), and 1185–1311 (KLTP…LQIG). Residues 70-79 (REKIERQQGI) are compositionally biased toward basic and acidic residues. 2 stretches are compositionally biased toward low complexity: residues 145–179 (SLGH…QQQQ) and 210–242 (PSSS…SSGG). A Phosphothreonine modification is found at Thr-416. Residues 424 to 437 (LKTEKNHSLEKQDS) are compositionally biased toward basic and acidic residues. The span at 439–450 (LENDLELSESED) shows a compositional bias: acidic residues. A phosphoserine mark is found at Ser-446 and Ser-448. The span at 459 to 479 (SAGNSSNSSESDSSESGSESS) shows a compositional bias: low complexity. Over residues 487 to 496 (HPNHQQHHHQ) the composition is skewed to basic residues. Composition is skewed to low complexity over residues 497–522 (LQQQ…PQPL) and 561–587 (PAGV…GSSS). The segment covering 588–599 (NKTPSPTESNKW) has biased composition (polar residues). The span at 723–755 (DSGTSASGSSSSSSSSSDSAVGGEVVPMPGPGE) shows a compositional bias: low complexity. Residues 774–786 (PTQSQKAPPSNSV) are compositionally biased toward polar residues. The span at 800–810 (QRQKKPRKKKA) shows a compositional bias: basic residues. A phosphoserine mark is found at Ser-819 and Ser-820. A DNA-binding region (a.T hook) is located at residues 849 to 861 (KKGRGRPRKQQQS). Positions 858 to 896 (QQQSGGSGNLSSASAGSSSQTKGPTLTAAKKPLAKTPLA) are enriched in low complexity. Residues Ser-869 and Ser-871 each carry the phosphoserine modification. Residues 907 to 917 (SQSSSNGNTPT) show a composition bias toward polar residues. 2 stretches are compositionally biased toward low complexity: residues 947–963 (SSSA…SSSS) and 988–1002 (ALLG…SSGS). Over residues 1009–1020 (SRSQVGSGQALA) the composition is skewed to polar residues. Residues 1032–1058 (SQHSQHLSSSECSSSSGGCTAVCSSSS) show a composition bias toward low complexity. The span at 1063-1080 (EGRREKERERKPKSDKNK) shows a compositional bias: basic and acidic residues. Residues 1120–1130 (QPPPPHAPPAA) are compositionally biased toward pro residues. Polar residues predominate over residues 1188-1203 (PAQQNGHLTPKDQATN). 2 stretches are compositionally biased toward basic and acidic residues: residues 1224-1241 (EHPV…EAKF) and 1250-1280 (FQLK…EQPP). Phosphoserine is present on Ser-1360. Thr-1362 is modified (phosphothreonine). Residues 1562-1581 (NTPSSISPSNSVGSQGSGSN) show a composition bias toward low complexity. The interval 1562-1586 (NTPSSISPSNSVGSQGSGSNTPPGR) is disordered.

Belongs to the AF4 family.

Its subcellular location is the nucleus. In terms of biological role, has a role in transcriptional regulation. Acts in parallel with the Ras/MAPK and the PI3K/PKB pathways in the control of cell identity and cellular growth. Essential for regulation of the cytoskeleton and cell growth but not for cell proliferation or growth rate. Required specifically for the microtubule-based basal transport of lipid droplets. Plays a partially redundant function downstream of Raf in cell fate specification in the developing eye. Pair-rule protein that regulates embryonic cellularization, gastrulation and segmentation. This chain is AF4/FMR2 family member lilli, found in Drosophila yakuba (Fruit fly).